The sequence spans 246 residues: Probable transcriptional regulatory protein WD_0484 (246 aa).

The disordered stretch occupies residues 1–22 (MAGHSQFSNIKHRKGAQDAKRS).

Belongs to the TACO1 family.

It localises to the cytoplasm. The chain is Probable transcriptional regulatory protein WD_0484 from Wolbachia pipientis wMel.